We begin with the raw amino-acid sequence, 300 residues long: Acetylglutamate kinase (300 aa).

Residues 73–74 (GG), R95, and N197 each bind substrate.

Belongs to the acetylglutamate kinase family. ArgB subfamily.

Its subcellular location is the cytoplasm. The enzyme catalyses N-acetyl-L-glutamate + ATP = N-acetyl-L-glutamyl 5-phosphate + ADP. Its pathway is amino-acid biosynthesis; L-arginine biosynthesis; N(2)-acetyl-L-ornithine from L-glutamate: step 2/4. In terms of biological role, catalyzes the ATP-dependent phosphorylation of N-acetyl-L-glutamate. This is Acetylglutamate kinase from Bordetella parapertussis (strain 12822 / ATCC BAA-587 / NCTC 13253).